The primary structure comprises 410 residues: Arginine biosynthesis bifunctional protein ArgJ (410 aa).

Substrate contacts are provided by Thr-160, Lys-186, Thr-197, Glu-283, Asn-405, and Thr-410. Catalysis depends on Thr-197, which acts as the Nucleophile.

The protein belongs to the ArgJ family. As to quaternary structure, heterotetramer of two alpha and two beta chains.

It localises to the cytoplasm. It catalyses the reaction N(2)-acetyl-L-ornithine + L-glutamate = N-acetyl-L-glutamate + L-ornithine. The catalysed reaction is L-glutamate + acetyl-CoA = N-acetyl-L-glutamate + CoA + H(+). Its pathway is amino-acid biosynthesis; L-arginine biosynthesis; L-ornithine and N-acetyl-L-glutamate from L-glutamate and N(2)-acetyl-L-ornithine (cyclic): step 1/1. It functions in the pathway amino-acid biosynthesis; L-arginine biosynthesis; N(2)-acetyl-L-ornithine from L-glutamate: step 1/4. Its activity is regulated as follows. Competitively inhibited by L-ornithine. Its function is as follows. Catalyzes two activities which are involved in the cyclic version of arginine biosynthesis: the synthesis of N-acetylglutamate from glutamate and acetyl-CoA as the acetyl donor, and of ornithine by transacetylation between N(2)-acetylornithine and glutamate. The polypeptide is Arginine biosynthesis bifunctional protein ArgJ (Geobacillus stearothermophilus (Bacillus stearothermophilus)).